Here is a 346-residue protein sequence, read N- to C-terminus: Heat-inducible transcription repressor HrcA (346 aa).

It belongs to the HrcA family.

Its function is as follows. Negative regulator of class I heat shock genes (grpE-dnaK-dnaJ and groELS operons). Prevents heat-shock induction of these operons. This Erythrobacter litoralis (strain HTCC2594) protein is Heat-inducible transcription repressor HrcA.